The chain runs to 78 residues: Small ribosomal subunit protein bS18 (78 aa).

It belongs to the bacterial ribosomal protein bS18 family. Part of the 30S ribosomal subunit. Forms a tight heterodimer with protein bS6.

Its function is as follows. Binds as a heterodimer with protein bS6 to the central domain of the 16S rRNA, where it helps stabilize the platform of the 30S subunit. The chain is Small ribosomal subunit protein bS18 from Lactobacillus delbrueckii subsp. bulgaricus (strain ATCC BAA-365 / Lb-18).